A 221-amino-acid polypeptide reads, in one-letter code: Stromal cell-derived factor 2-like protein 1 (221 aa).

The signal sequence occupies residues 1–28 (MWSAGRGGAAWPVLLGLLLALLVPGGGA). MIR domains follow at residues 33–87 (AELV…IRGG), 95–150 (GSPV…VRCS), and 151–205 (GQHW…AMEG). Residue serine 215 is modified to Phosphoserine. Positions 218 to 221 (HDEL) match the Prevents secretion from ER motif.

Part of a large chaperone multiprotein complex comprising CABP1, DNAJB11, HSP90B1, HSPA5, HYOU, PDIA2, PDIA4, PPIB, SDF2L1, UGGT1 and very small amounts of ERP29, but not, or at very low levels, CALR nor CANX. Ubiquitously expressed with high expression in testis, moderate expression in the pancreas, spleen, prostate, small intestine and colon. Very low expression is seen in brain and skeletal muscle.

The protein localises to the endoplasmic reticulum lumen. This chain is Stromal cell-derived factor 2-like protein 1 (SDF2L1), found in Homo sapiens (Human).